A 354-amino-acid polypeptide reads, in one-letter code: MGCTLSAEDKAAVERSKMIDRNLREDGEKAAREVKLLLLGAGESGKSTIVKQMKIIHEAGYSEEECKQYKAVVYSNTIQSIIAIIRAMGRLKIDFGDSARADDARQLFVLAGAAEEGFMTAELAGVIKRLWKDSGVQACFNRSREYQLNDSAAYYLNDLDRIAQPNYIPTQQDVLRTRVKTTGIVETHFTFKDLHFKMFDVGGQRSERKKWIHCFEGVTAIIFCVALSDYDLVLAEDEEMNRMHESMKLFDSICNNKWFTDTSIILFLNKKDLFEEKIKKSPLTICYPEYAGSNTYEEAAAYIQCQFEDLNKRKDTKEIYTHFTCATDTKNVQFVFDAVTDVIIKNNLKDCGLF.

Glycine 2 carries the N-myristoyl glycine lipid modification. A lipid anchor (S-palmitoyl cysteine) is attached at cysteine 3. Positions 32–354 (REVKLLLLGA…KNNLKDCGLF (323 aa)) constitute a G-alpha domain. The interval 35 to 48 (KLLLLGAGESGKST) is G1 motif. GTP contacts are provided by residues 43-48 (ESGKST), 150-151 (DS), and 175-178 (LRTR). Serine 47 is a Mg(2+) binding site. Positions 173–181 (DVLRTRVKT) are G2 motif. Residue threonine 181 coordinates Mg(2+). Positions 196–205 (FKMFDVGGQR) are G3 motif. Residues 200 to 204 (DVGGQ), 269 to 272 (NKKD), and alanine 326 contribute to the GTP site. Residues 265 to 272 (ILFLNKKD) form a G4 motif region. Residues 324–329 (TCATDT) are G5 motif.

It belongs to the G-alpha family. G(i/o/t/z) subfamily. In terms of assembly, heterotrimeric G proteins are composed of 3 units; alpha, beta and gamma. The alpha chain contains the guanine nucleotide binding site. Part of a spindle orientation complex at least composed of GNAI1, GPSM2 and NUMA1. Identified in complex with the beta subunit GNB1 and the gamma subunit GNG1. Identified in complex with the beta subunit GNB1 and the gamma subunit GNG2. Component of the TAS2R14-GNAI1 complex, consisting of TAS2R14, GNAI1, GNB1 and GNG2; within the complex interacts with TAS2R14; this complex plays a role in the perception of bitterness. GTP binding causes dissociation of the heterotrimer, liberating the individual subunits so that they can interact with downstream effector proteins. Interacts (GDP-bound form) with GPSM1; this inhibits guanine nucleotide exchange and GTP binding. Interacts (GDP-bound form) with GPSM2 (via GoLoco domains); this inhibits guanine nucleotide exchange. Interacts with RGS10; this strongly enhances GTP hydrolysis. Interacts with RGS1 and RGS16; this strongly enhances GTPase activity. Interacts with RGS4. Interacts with RGS12. Interacts (via active GTP- or inactive GDP-bound forms) with RGS14 (via RGS and GoLoco domains). Interacts with RGS3, RGS6, RGS7, RGS8, RGS17, RGS18 and RGS20 (in vitro). Interacts (GDP-bound form) with RIC8A (via C-terminus); promoting GNAI1 folding and association with the plasma membrane. Interacts (inactive GDP-bound form) with NUCB1 (via GBA motif); the interaction leads to activation of GNAI1. Interacts (inactive GDP-bound form) with CCDC88C/DAPLE (via GBA motif); the interaction leads to activation of GNAI1. Interacts (inactive GDP-bound form) with CCDC8A/GIV (via GBA motif). Myristoylation at Gly-2 is required for membrane anchoring before palmitoylation. In terms of processing, palmitoylation at Cys-3 varies with membrane lipid composition.

It is found in the nucleus. It localises to the cytoplasm. Its subcellular location is the cell membrane. The protein resides in the cytoskeleton. The protein localises to the microtubule organizing center. It is found in the centrosome. It localises to the cell cortex. Its subcellular location is the membrane. It carries out the reaction GTP + H2O = GDP + phosphate + H(+). Its function is as follows. Guanine nucleotide-binding proteins (G proteins) function as transducers downstream of G protein-coupled receptors (GPCRs) in numerous signaling cascades. The alpha chain contains the guanine nucleotide binding site and alternates between an active, GTP-bound state and an inactive, GDP-bound state. Signaling by an activated GPCR promotes GDP release and GTP binding. The alpha subunit has a low GTPase activity that converts bound GTP to GDP, thereby terminating the signal. Both GDP release and GTP hydrolysis are modulated by numerous regulatory proteins. Signaling is mediated via effector proteins, such as adenylate cyclase. Inhibits adenylate cyclase activity of ADCY1, ADCY5 and ADCY6, leading to decreased intracellular cAMP levels. The inactive GDP-bound form prevents the association of RGS14 with centrosomes and is required for the translocation of RGS14 from the cytoplasm to the plasma membrane. Required for normal cytokinesis during mitosis. Required for cortical dynein-dynactin complex recruitment during metaphase. This is Guanine nucleotide-binding protein G(i) subunit alpha-1 (GNAI1) from Bos taurus (Bovine).